Consider the following 210-residue polypeptide: MPSLLIIVLIIHVVTYLINTIGANTIDSLLWLLYLKLPNQTSQTANEQRRLKREVMQLKREMNATSSQDEFAKWAKLRRRHDKTMEEYEAKNKALGKHKSSFDLAVKSIRFFSTTGLKLFLQFWCSKTPIFELPRGWIPWQVEWVLSFPRAPLGTVSIQIWGGVCATVVSLAGDAIGVVNVYLTSKAPKQKEPATSGENSARPMAIKKEL.

The Lumenal portion of the chain corresponds to 1 to 4 (MPSL). The helical transmembrane segment at 5–24 (LIIVLIIHVVTYLINTIGAN) threads the bilayer. The Cytoplasmic segment spans residues 25–110 (TIDSLLWLLY…SFDLAVKSIR (86 aa)). Positions 39–95 (NQTSQTANEQRRLKREVMQLKREMNATSSQDEFAKWAKLRRRHDKTMEEYEAKNKAL) form a coiled coil. Residues 111-131 (FFSTTGLKLFLQFWCSKTPIF) form a helical membrane-spanning segment. Residues 132 to 155 (ELPRGWIPWQVEWVLSFPRAPLGT) lie on the Lumenal side of the membrane. The helical transmembrane segment at 156-172 (VSIQIWGGVCATVVSLA) threads the bilayer. Over 173–210 (GDAIGVVNVYLTSKAPKQKEPATSGENSARPMAIKKEL) the chain is Cytoplasmic. The interval 189 to 210 (KQKEPATSGENSARPMAIKKEL) is disordered.

The protein belongs to the WRB/GET1 family. Interacts with GET3.

The protein resides in the endoplasmic reticulum membrane. Its function is as follows. Required for the post-translational delivery of tail-anchored (TA) proteins to the endoplasmic reticulum. Acts as a membrane receptor for soluble GET3, which recognizes and selectively binds the transmembrane domain of TA proteins in the cytosol. This chain is Protein GET1, found in Coccidioides immitis (strain RS) (Valley fever fungus).